The chain runs to 122 residues: Large ribosomal subunit protein uL14c (122 aa).

The protein belongs to the universal ribosomal protein uL14 family. Part of the 50S ribosomal subunit.

It is found in the plastid. The protein localises to the chloroplast. Its function is as follows. Binds to 23S rRNA. The polypeptide is Large ribosomal subunit protein uL14c (Buxus microphylla (Littleleaf boxwood)).